The following is a 101-amino-acid chain: Defensin-like protein 222 (101 aa).

A signal peptide spans 1–21; it reads MRTIVLFSTLMILVLSCMSNA. 3 disulfide bridges follow: Cys68/Cys85, Cys71/Cys90, and Cys75/Cys92.

Belongs to the DEFL family.

The protein localises to the secreted. This Arabidopsis thaliana (Mouse-ear cress) protein is Defensin-like protein 222.